We begin with the raw amino-acid sequence, 204 residues long: FMN-dependent NADH:quinone oxidoreductase (204 aa).

Residue serine 9 participates in FMN binding.

Belongs to the azoreductase type 1 family. In terms of assembly, homodimer. FMN serves as cofactor.

The enzyme catalyses 2 a quinone + NADH + H(+) = 2 a 1,4-benzosemiquinone + NAD(+). It catalyses the reaction N,N-dimethyl-1,4-phenylenediamine + anthranilate + 2 NAD(+) = 2-(4-dimethylaminophenyl)diazenylbenzoate + 2 NADH + 2 H(+). Quinone reductase that provides resistance to thiol-specific stress caused by electrophilic quinones. In terms of biological role, also exhibits azoreductase activity. Catalyzes the reductive cleavage of the azo bond in aromatic azo compounds to the corresponding amines. The protein is FMN-dependent NADH:quinone oxidoreductase of Thiobacillus denitrificans (strain ATCC 25259 / T1).